Reading from the N-terminus, the 466-residue chain is RuvB-like helicase 2 (466 aa).

Residue 74–81 (GPPSTGKT) coordinates ATP.

This sequence belongs to the RuvB family. In terms of assembly, may form heterododecamers with RVB1. Component of the SWR1 chromatin remodeling complex, the INO80 chromatin remodeling complex, and of the R2TP complex.

The protein resides in the nucleus. The catalysed reaction is ATP + H2O = ADP + phosphate + H(+). Functionally, DNA helicase which participates in several chromatin remodeling complexes, including the SWR1 and the INO80 complexes. The SWR1 complex mediates the ATP-dependent exchange of histone H2A for the H2A variant HZT1 leading to transcriptional regulation of selected genes by chromatin remodeling. The INO80 complex remodels chromatin by shifting nucleosomes and is involved in DNA repair. Also involved in pre-rRNA processing. The sequence is that of RuvB-like helicase 2 (RVB2) from Yarrowia lipolytica (strain CLIB 122 / E 150) (Yeast).